The sequence spans 364 residues: Ferrochelatase (364 aa).

Fe cation contacts are provided by H210 and E291.

It belongs to the ferrochelatase family.

It is found in the cytoplasm. The catalysed reaction is heme b + 2 H(+) = protoporphyrin IX + Fe(2+). It functions in the pathway porphyrin-containing compound metabolism; protoheme biosynthesis; protoheme from protoporphyrin-IX: step 1/1. In terms of biological role, catalyzes the ferrous insertion into protoporphyrin IX. The sequence is that of Ferrochelatase from Idiomarina loihiensis (strain ATCC BAA-735 / DSM 15497 / L2-TR).